The sequence spans 205 residues: Protease (205 aa).

Catalysis depends on residues H54, D71, and C122.

Belongs to the peptidase C5 family. In terms of assembly, interacts with protease cofactor pVI-C; this interaction is necessary for protease activation.

It is found in the virion. The protein localises to the host nucleus. The catalysed reaction is Cleaves proteins of the adenovirus and its host cell at two consensus sites: -Yaa-Xaa-Gly-Gly-|-Xaa- and -Yaa-Xaa-Gly-Xaa-|-Gly- (in which Yaa is Met, Ile or Leu, and Xaa is any amino acid).. Requires DNA and protease cofactor for maximal activation. Inside nascent virions, becomes partially activated by binding to the viral DNA, allowing it to cleave the cofactor that binds to the protease and fully activates it. Actin, like the viral protease cofactor, seems to act as a cofactor in the cleavage of cytokeratin 18 and of actin itself. Functionally, cleaves viral precursor proteins (pTP, pIIIa, pVI, pVII, pVIII, and pX) inside newly assembled particles giving rise to mature virions. Protease complexed to its cofactor slides along the viral DNA to specifically locate and cleave the viral precursors. Mature virions have a weakened organization compared to the unmature virions, thereby facilitating subsequent uncoating. Without maturation, the particle lacks infectivity and is unable to uncoat. Late in adenovirus infection, in the cytoplasm, may participate in the cytoskeleton destruction. Cleaves host cell cytoskeletal keratins K7 and K18. The polypeptide is Protease (Homo sapiens (Human)).